Reading from the N-terminus, the 142-residue chain is MLKKDKSELTDIEYIVTQENGTEPPFMNEYWNHFAKGIYVDKISGKPLFTSEEKFHSECGWPSFSKALDDDEIIELVDKSFGMVRTEVRSEESNSHLGHVFNDGPKESGGLRYCINSAAIQFIPYEKLEELGYGDLISHFDK.

In terms of domain architecture, MsrB spans 2–125 (LKKDKSELTD…NSAAIQFIPY (124 aa)). The Nucleophile role is filled by Cys114.

Belongs to the MsrB Met sulfoxide reductase family.

The enzyme catalyses L-methionyl-[protein] + [thioredoxin]-disulfide + H2O = L-methionyl-(R)-S-oxide-[protein] + [thioredoxin]-dithiol. The polypeptide is Peptide methionine sulfoxide reductase MsrB (Staphylococcus aureus (strain Mu3 / ATCC 700698)).